The sequence spans 330 residues: Phosphate acyltransferase (330 aa).

Belongs to the PlsX family. Homodimer. Probably interacts with PlsY.

The protein resides in the cytoplasm. It catalyses the reaction a fatty acyl-[ACP] + phosphate = an acyl phosphate + holo-[ACP]. The protein operates within lipid metabolism; phospholipid metabolism. Its function is as follows. Catalyzes the reversible formation of acyl-phosphate (acyl-PO(4)) from acyl-[acyl-carrier-protein] (acyl-ACP). This enzyme utilizes acyl-ACP as fatty acyl donor, but not acyl-CoA. The sequence is that of Phosphate acyltransferase from Teredinibacter turnerae (strain ATCC 39867 / T7901).